The following is a 342-amino-acid chain: Pre-mRNA-splicing factor 18 (342 aa).

An N-acetylmethionine modification is found at Met-1.

This sequence belongs to the PRP18 family. As to quaternary structure, heterodimer with PPIH. Interacts with PRPF4 and with the spliceosome. Part of a complex containing U4/U6 snRNPs.

It localises to the nucleus speckle. In terms of biological role, participates in the second step of pre-mRNA splicing. The protein is Pre-mRNA-splicing factor 18 (Prpf18) of Mus musculus (Mouse).